We begin with the raw amino-acid sequence, 287 residues long: Uroplakin-3a (287 aa).

Positions 1 to 18 (MLLLWALLALGCLRCGWT) are cleaved as a signal peptide. Residues 19 to 207 (VNLQPQLASV…DTWPGRRSGG (189 aa)) lie on the Lumenal side of the membrane. 3 N-linked (GlcNAc...) asparagine glycosylation sites follow: asparagine 74, asparagine 139, and asparagine 170. Residues 208-235 (MIVITSILGSLPFFLLVGFAGAIILSFV) traverse the membrane as a helical segment. At 236–287 (DMGSSDGEMTHDSQITQEAVPKTLGTSEPSYSSVNRGPPLDRAEVFSSKLQD) the chain is on the cytoplasmic side. The disordered stretch occupies residues 243-287 (EMTHDSQITQEAVPKTLGTSEPSYSSVNRGPPLDRAEVFSSKLQD). Residues 259–270 (LGTSEPSYSSVN) are compositionally biased toward polar residues.

It belongs to the uroplakin-3 family. Heterodimer with uroplakin-1B (UPK1B).

Its subcellular location is the endoplasmic reticulum membrane. In terms of biological role, component of the asymmetric unit membrane (AUM); a highly specialized biomembrane elaborated by terminally differentiated urothelial cells. May play an important role in AUM-cytoskeleton interaction in terminally differentiated urothelial cells. It also contributes to the formation of urothelial glycocalyx which may play an important role in preventing bacterial adherence. This chain is Uroplakin-3a (Upk3a), found in Mus musculus (Mouse).